The sequence spans 559 residues: Sulfite reductase [NADPH] hemoprotein beta-component (559 aa).

[4Fe-4S] cluster-binding residues include cysteine 423, cysteine 429, cysteine 468, and cysteine 472. Cysteine 472 contacts siroheme.

This sequence belongs to the nitrite and sulfite reductase 4Fe-4S domain family. In terms of assembly, alpha(8)-beta(8). The alpha component is a flavoprotein, the beta component is a hemoprotein. The cofactor is siroheme. It depends on [4Fe-4S] cluster as a cofactor.

The catalysed reaction is hydrogen sulfide + 3 NADP(+) + 3 H2O = sulfite + 3 NADPH + 4 H(+). The protein operates within sulfur metabolism; hydrogen sulfide biosynthesis; hydrogen sulfide from sulfite (NADPH route): step 1/1. Component of the sulfite reductase complex that catalyzes the 6-electron reduction of sulfite to sulfide. This is one of several activities required for the biosynthesis of L-cysteine from sulfate. The protein is Sulfite reductase [NADPH] hemoprotein beta-component of Thiocapsa roseopersicina.